Reading from the N-terminus, the 201-residue chain is Probable chemoreceptor glutamine deamidase CheD 1 (201 aa).

It belongs to the CheD family.

It carries out the reaction L-glutaminyl-[protein] + H2O = L-glutamyl-[protein] + NH4(+). Probably deamidates glutamine residues to glutamate on methyl-accepting chemotaxis receptors (MCPs), playing an important role in chemotaxis. The chain is Probable chemoreceptor glutamine deamidase CheD 1 from Dechloromonas aromatica (strain RCB).